The primary structure comprises 404 residues: Serine/threonine transporter SstT (404 aa).

The next 9 helical transmembrane spans lie at 12-32 (GGNL…LALV), 53-73 (AIAP…KEVG), 81-101 (ILVM…VLSF), 140-160 (ALAN…GIAL), 177-197 (AVSF…FGLV), 216-236 (LGVL…LIVF), 287-307 (VAIP…VTVL), 329-349 (IVAS…LLLI), and 356-376 (FNIP…IGVI).

It belongs to the dicarboxylate/amino acid:cation symporter (DAACS) (TC 2.A.23) family.

It is found in the cell inner membrane. It carries out the reaction L-serine(in) + Na(+)(in) = L-serine(out) + Na(+)(out). The enzyme catalyses L-threonine(in) + Na(+)(in) = L-threonine(out) + Na(+)(out). Its function is as follows. Involved in the import of serine and threonine into the cell, with the concomitant import of sodium (symport system). This is Serine/threonine transporter SstT from Actinobacillus pleuropneumoniae serotype 7 (strain AP76).